Here is a 322-residue protein sequence, read N- to C-terminus: Acetyl-coenzyme A carboxylase carboxyl transferase subunit alpha (322 aa).

A CoA carboxyltransferase C-terminal domain is found at proline 40–glutamate 297.

Belongs to the AccA family. Acetyl-CoA carboxylase is a heterohexamer composed of biotin carboxyl carrier protein (AccB), biotin carboxylase (AccC) and two subunits each of ACCase subunit alpha (AccA) and ACCase subunit beta (AccD).

The protein resides in the cytoplasm. It carries out the reaction N(6)-carboxybiotinyl-L-lysyl-[protein] + acetyl-CoA = N(6)-biotinyl-L-lysyl-[protein] + malonyl-CoA. It participates in lipid metabolism; malonyl-CoA biosynthesis; malonyl-CoA from acetyl-CoA: step 1/1. Component of the acetyl coenzyme A carboxylase (ACC) complex. First, biotin carboxylase catalyzes the carboxylation of biotin on its carrier protein (BCCP) and then the CO(2) group is transferred by the carboxyltransferase to acetyl-CoA to form malonyl-CoA. The sequence is that of Acetyl-coenzyme A carboxylase carboxyl transferase subunit alpha from Gemmatimonas aurantiaca (strain DSM 14586 / JCM 11422 / NBRC 100505 / T-27).